We begin with the raw amino-acid sequence, 356 residues long: Alanine racemase, catabolic (356 aa).

K35 acts as the Proton acceptor; specific for D-alanine in catalysis. At K35 the chain carries N6-(pyridoxal phosphate)lysine. Substrate is bound at residue R130. Y253 (proton acceptor; specific for L-alanine) is an active-site residue. M301 provides a ligand contact to substrate.

This sequence belongs to the alanine racemase family. It depends on pyridoxal 5'-phosphate as a cofactor.

The enzyme catalyses L-alanine = D-alanine. Isomerizes L-alanine to D-alanine which is then oxidized to pyruvate by DadA. This chain is Alanine racemase, catabolic (dadX), found in Escherichia coli O6:H1 (strain CFT073 / ATCC 700928 / UPEC).